The following is a 380-amino-acid chain: Erythronate-4-phosphate dehydrogenase (380 aa).

2 residues coordinate substrate: serine 45 and threonine 66. NAD(+)-binding positions include 126–127 (QV), aspartate 146, threonine 174, 205–207 (ASR), and aspartate 231. Arginine 207 is a catalytic residue. Residue glutamate 236 is part of the active site. Residue histidine 253 is the Proton donor of the active site. Residue glycine 256 participates in NAD(+) binding. Residue tyrosine 257 coordinates substrate.

It belongs to the D-isomer specific 2-hydroxyacid dehydrogenase family. PdxB subfamily. Homodimer.

The protein resides in the cytoplasm. The catalysed reaction is 4-phospho-D-erythronate + NAD(+) = (R)-3-hydroxy-2-oxo-4-phosphooxybutanoate + NADH + H(+). It participates in cofactor biosynthesis; pyridoxine 5'-phosphate biosynthesis; pyridoxine 5'-phosphate from D-erythrose 4-phosphate: step 2/5. Functionally, catalyzes the oxidation of erythronate-4-phosphate to 3-hydroxy-2-oxo-4-phosphonooxybutanoate. The sequence is that of Erythronate-4-phosphate dehydrogenase from Pseudomonas syringae pv. tomato (strain ATCC BAA-871 / DC3000).